A 148-amino-acid polypeptide reads, in one-letter code: SsrA-binding protein (148 aa).

A compositionally biased stretch (basic and acidic residues) spans 129-142 (ETEKKRDWEREKAR). Residues 129 to 148 (ETEKKRDWEREKARIMRAGT) form a disordered region.

The protein belongs to the SmpB family.

It localises to the cytoplasm. Its function is as follows. Required for rescue of stalled ribosomes mediated by trans-translation. Binds to transfer-messenger RNA (tmRNA), required for stable association of tmRNA with ribosomes. tmRNA and SmpB together mimic tRNA shape, replacing the anticodon stem-loop with SmpB. tmRNA is encoded by the ssrA gene; the 2 termini fold to resemble tRNA(Ala) and it encodes a 'tag peptide', a short internal open reading frame. During trans-translation Ala-aminoacylated tmRNA acts like a tRNA, entering the A-site of stalled ribosomes, displacing the stalled mRNA. The ribosome then switches to translate the ORF on the tmRNA; the nascent peptide is terminated with the 'tag peptide' encoded by the tmRNA and targeted for degradation. The ribosome is freed to recommence translation, which seems to be the essential function of trans-translation. The chain is SsrA-binding protein from Burkholderia orbicola (strain AU 1054).